The chain runs to 301 residues: Recombination-associated protein RdgC (301 aa).

The protein belongs to the RdgC family.

The protein resides in the cytoplasm. Its subcellular location is the nucleoid. In terms of biological role, may be involved in recombination. The protein is Recombination-associated protein RdgC of Stenotrophomonas maltophilia (strain R551-3).